Here is a 120-residue protein sequence, read N- to C-terminus: Cytochrome c oxidase subunit 5 (120 aa).

A Blocked amino end (Ser) modification is found at Ser2. Residues Cys76, His84, Cys99, and Cys102 each coordinate Zn(2+).

This sequence belongs to the cytochrome c oxidase subunit 5B family. As to quaternary structure, component of the cytochrome c oxidase (complex IV, CIV), a multisubunit enzyme composed of a catalytic core of 3 subunits and several supernumerary subunits. The complex exists as a monomer or a dimer and forms supercomplexes (SCs) in the inner mitochondrial membrane with ubiquinol-cytochrome c oxidoreductase (cytochrome b-c1 complex, complex III, CIII). Slime mold cytochrome c oxidase consists of at least seven different polypeptides species, subunits I, II, III, IV, V, VI, and VIIe/s in order of MW.

Its subcellular location is the mitochondrion inner membrane. Its pathway is energy metabolism; oxidative phosphorylation. Functionally, component of the cytochrome c oxidase, the last enzyme in the mitochondrial electron transport chain which drives oxidative phosphorylation. The respiratory chain contains 3 multisubunit complexes succinate dehydrogenase (complex II, CII), ubiquinol-cytochrome c oxidoreductase (cytochrome b-c1 complex, complex III, CIII) and cytochrome c oxidase (complex IV, CIV), that cooperate to transfer electrons derived from NADH and succinate to molecular oxygen, creating an electrochemical gradient over the inner membrane that drives transmembrane transport and the ATP synthase. Cytochrome c oxidase is the component of the respiratory chain that catalyzes the reduction of oxygen to water. Electrons originating from reduced cytochrome c in the intermembrane space (IMS) are transferred via the dinuclear copper A center (CU(A)) of subunit 2 and heme A of subunit 1 to the active site in subunit 1, a binuclear center (BNC) formed by heme A3 and copper B (CU(B)). The BNC reduces molecular oxygen to 2 water molecules using 4 electrons from cytochrome c in the IMS and 4 protons from the mitochondrial matrix. This is Cytochrome c oxidase subunit 5 (cxeA) from Dictyostelium discoideum (Social amoeba).